The chain runs to 196 residues: Nucleoid occlusion factor SlmA (196 aa).

The 62-residue stretch at 7–68 folds into the HTH tetR-type domain; sequence TNRREEILQA…GLIEFIEDSI (62 aa). The segment at residues 31–50 is a DNA-binding region (H-T-H motif); it reads TTAKLAAQVGVSEAALYRHF. The stretch at 115 to 142 forms a coiled coil; it reads EQDRLQSRINQLFERIETQLRQVLRERK.

The protein belongs to the nucleoid occlusion factor SlmA family. In terms of assembly, homodimer. Interacts with FtsZ.

Its subcellular location is the cytoplasm. The protein resides in the nucleoid. In terms of biological role, required for nucleoid occlusion (NO) phenomenon, which prevents Z-ring formation and cell division over the nucleoid. Acts as a DNA-associated cell division inhibitor that binds simultaneously chromosomal DNA and FtsZ, and disrupts the assembly of FtsZ polymers. SlmA-DNA-binding sequences (SBS) are dispersed on non-Ter regions of the chromosome, preventing FtsZ polymerization at these regions. This is Nucleoid occlusion factor SlmA from Photobacterium profundum (strain SS9).